A 364-amino-acid chain; its full sequence is LFHPEQLISGKEDAANNFARGHYTVGKEIVDLCLDRVRKLSDNCTGLQGFLVFNAVGGGTGSGLGSLLLERLSVDYGKKSKLGFTIYPSPQVSTAVVEPYNSVLSTHSLLEHTDVAVLLDNEAIYDICRRSLLDIERPTYTNLNRLVSQIISSLTTSLRFDGALNVDVTEFQTNLVPYPRIHFMLSSYAPVISAAKAYHEQLSVPEITNAVFEPSSMMAKCDPRHGKYMACCLMYRGDVVPKDVNAAVATIKTKRTVQFVDWCPTGFKCGINYQPPSVVPGGDLAKVQRAVCMISNNTAVAEVFSRIDHKFDLMYAKLAFVHWYVGEGMEEGEFSEAREDLAALEKDYEEVAAEGVDEPEGDDY.

GTP-binding residues include G59, T60, T94, N121, and N144. E170 is a catalytic residue.

The protein belongs to the tubulin family. As to quaternary structure, dimer of alpha and beta chains. A typical microtubule is a hollow water-filled tube with an outer diameter of 25 nm and an inner diameter of 15 nM. Alpha-beta heterodimers associate head-to-tail to form protofilaments running lengthwise along the microtubule wall with the beta-tubulin subunit facing the microtubule plus end conferring a structural polarity. Microtubules usually have 13 protofilaments but different protofilament numbers can be found in some organisms and specialized cells. Mg(2+) is required as a cofactor. In terms of processing, undergoes a tyrosination/detyrosination cycle, the cyclic removal and re-addition of a C-terminal tyrosine residue by the enzymes tubulin tyrosine carboxypeptidase (TTCP) and tubulin tyrosine ligase (TTL), respectively.

The protein localises to the cytoplasm. Its subcellular location is the cytoskeleton. The catalysed reaction is GTP + H2O = GDP + phosphate + H(+). Its function is as follows. Tubulin is the major constituent of microtubules, a cylinder consisting of laterally associated linear protofilaments composed of alpha- and beta-tubulin heterodimers. Microtubules grow by the addition of GTP-tubulin dimers to the microtubule end, where a stabilizing cap forms. Below the cap, tubulin dimers are in GDP-bound state, owing to GTPase activity of alpha-tubulin. The protein is Tubulin alpha-2 chain (TUBA2) of Anemia phyllitidis (Fern).